A 218-amino-acid chain; its full sequence is Small ribosomal subunit protein uS3 (218 aa).

Residues 38 to 106 (VREYINKRLQ…RVHINIVEIK (69 aa)) enclose the KH type-2 domain.

It belongs to the universal ribosomal protein uS3 family. Part of the 30S ribosomal subunit. Forms a tight complex with proteins S10 and S14.

Functionally, binds the lower part of the 30S subunit head. Binds mRNA in the 70S ribosome, positioning it for translation. The sequence is that of Small ribosomal subunit protein uS3 from Geobacillus thermodenitrificans (strain NG80-2).